A 241-amino-acid chain; its full sequence is Venom nerve growth factor (241 aa).

The first 18 residues, 1 to 18 (MSMLCYTLIIAFLIGIWA), serve as a signal peptide directing secretion. A propeptide spanning residues 19 to 122 (APKSEDNVPL…SLNRNIRAKR (104 aa)) is cleaved from the precursor. 3 cysteine pairs are disulfide-bonded: C136/C201, C179/C229, and C189/C231. N145 is a glycosylation site (N-linked (GlcNAc...) asparagine).

The protein belongs to the NGF-beta family. Homodimer; non-covalently linked. In terms of tissue distribution, expressed by the venom gland.

It is found in the secreted. Nerve growth factor is important for the development and maintenance of the sympathetic and sensory nervous systems. It stimulates division and differentiation of sympathetic and embryonic sensory neurons as well as basal forebrain cholinergic neurons in the brain. Its relevance in the snake venom is not clear. However, it has been shown to inhibit metalloproteinase-dependent proteolysis of platelet glycoprotein Ib alpha, suggesting a metalloproteinase inhibition to prevent metalloprotease autodigestion and/or protection against prey proteases. Binds a lipid between the two protein chains in the homodimer. The lipid-bound form promotes histamine relase from mouse mast cells, contrary to the lipid-free form. This chain is Venom nerve growth factor, found in Crotalus durissus terrificus (South American rattlesnake).